Reading from the N-terminus, the 138-residue chain is UPF0355 protein SSP2326 (138 aa).

Positions 115–138 are disordered; it reads NVAFETNQTKSNSHYSEETNGPKS. The span at 118 to 138 shows a compositional bias: polar residues; that stretch reads FETNQTKSNSHYSEETNGPKS.

This sequence belongs to the UPF0355 family.

In Staphylococcus saprophyticus subsp. saprophyticus (strain ATCC 15305 / DSM 20229 / NCIMB 8711 / NCTC 7292 / S-41), this protein is UPF0355 protein SSP2326.